The chain runs to 334 residues: 3-dehydroquinate synthase (334 aa).

This sequence belongs to the archaeal-type DHQ synthase family.

The catalysed reaction is 2-amino-2,3,7-trideoxy-D-lyxo-hept-6-ulosonate + NAD(+) + H2O = 3-dehydroquinate + NH4(+) + NADH + H(+). In terms of biological role, catalyzes the oxidative deamination and cyclization of 2-amino-3,7-dideoxy-D-threo-hept-6-ulosonic acid (ADH) to yield 3-dehydroquinate (DHQ), which is fed into the canonical shikimic pathway of aromatic amino acid biosynthesis. The sequence is that of 3-dehydroquinate synthase from Korarchaeum cryptofilum (strain OPF8).